The chain runs to 396 residues: S-arrestin (396 aa).

It belongs to the arrestin family.

Functionally, arrestin is one of the major proteins of the ros (retinal rod outer segments); it binds to photoactivated-phosphorylated rhodopsin, thereby apparently preventing the transducin-mediated activation of phosphodiesterase. The sequence is that of S-arrestin from Lithobates pipiens (Northern leopard frog).